The sequence spans 547 residues: MSSLTQLPQWQALQTHLEENRSVQMRDLFDQDSQRFSRFSLQQGELLFDYSKNRITAETMARLLDLARAQDVEGWRDRMFAGEAINETEGRAVLHVALRNRSGRPIRVAGEDVMPAINQVLQQMRQFSEAVRSGAWKGQSGQAITDVVNIGIGGSDLGPVMVCEALKPYHQPGLSVHFVSNVDGTHMAETLKGLNAETTLFIVASKTFTTQETLTNAHTARDWLVAQLGEAAVRKHFVALSTNAEAVSAFGIDTDNMFAFWNWVGGRYSLWSAIGLPIAIAVGFEGFMALHDGAYAMDEHFRTAPLASNMPVIKALIGIWNHNFLGAESFAVLPYDQYLHRLAAYLQQADMESNGKYVTRDGARVDYTTGPVLFGEPGTNGQHSFYQLIHQSTRLVPADFIAAAHTHNPVGDHHAKLLSNFFAQTEALMTGKTAAQVRQELEAAGLHGAALEALVPHKVFDGNRPTNSILVRQFTPYTLGQLIALYEHTIHVQGMVWGINPYDQWGVELGKQLAKKILPELTTPGEVHSHDGSTNGLINHYKAWLAE.

Glu352 acts as the Proton donor in catalysis. Active-site residues include His383 and Lys511.

Belongs to the GPI family.

The protein resides in the cytoplasm. It catalyses the reaction alpha-D-glucose 6-phosphate = beta-D-fructose 6-phosphate. It functions in the pathway carbohydrate biosynthesis; gluconeogenesis. The protein operates within carbohydrate degradation; glycolysis; D-glyceraldehyde 3-phosphate and glycerone phosphate from D-glucose: step 2/4. Catalyzes the reversible isomerization of glucose-6-phosphate to fructose-6-phosphate. The polypeptide is Glucose-6-phosphate isomerase (Magnetococcus marinus (strain ATCC BAA-1437 / JCM 17883 / MC-1)).